The primary structure comprises 139 residues: Large ribosomal subunit protein uL16 (139 aa).

It belongs to the universal ribosomal protein uL16 family. As to quaternary structure, part of the 50S ribosomal subunit.

Functionally, binds 23S rRNA and is also seen to make contacts with the A and possibly P site tRNAs. The protein is Large ribosomal subunit protein uL16 of Treponema pallidum (strain Nichols).